We begin with the raw amino-acid sequence, 363 residues long: G kinase-anchoring protein 1-B (363 aa).

Disordered stretches follow at residues 17–79 (ALLK…RNLA) and 147–182 (VNGD…VPLK). The stretch at 50–79 (KTNVNEKKKEKRRKKKEQQQSEANELRNLA) forms a coiled coil. Positions 160-170 (KVNKKDKRKNN) are enriched in basic residues. Coiled coils occupy residues 249–298 (DGKT…QEGE) and 328–348 (AALE…VRYQ).

The protein belongs to the GKAP1 family.

The protein resides in the golgi apparatus. In terms of biological role, may play a role in the regulation of insulin-dependent IRS1 tyrosine phosphorylation in adipocytes. The protein is G kinase-anchoring protein 1-B (gkap1-b) of Xenopus laevis (African clawed frog).